We begin with the raw amino-acid sequence, 1122 residues long: Protein CAF130 (1122 aa).

A disordered region spans residues 1–24; it reads MTKKKAATNYAERQNLASEDSSGD. Over residues 11–24 the composition is skewed to polar residues; that stretch reads AERQNLASEDSSGD. Position 1042 is a phosphoserine (Ser1042).

As to quaternary structure, subunit of the 1.0 MDa CCR4-NOT core complex that contains CCR4, CAF1, NOT1, NOT2, NOT3, NOT4, NOT5, CAF40 and CAF130. In the complex interacts with NOT1. The core complex probably is part of a less characterized 1.9 MDa CCR4-NOT complex.

Its subcellular location is the cytoplasm. The protein resides in the nucleus. Functionally, acts as a component of the CCR4-NOT core complex, which in the nucleus seems to be a general transcription factor, and in the cytoplasm the major mRNA deadenylase involved in mRNA turnover. The chain is Protein CAF130 (CAF130) from Saccharomyces cerevisiae (strain ATCC 204508 / S288c) (Baker's yeast).